The primary structure comprises 120 residues: 2-amino-4-hydroxy-6-hydroxymethyldihydropteridine pyrophosphokinase (120 aa).

Belongs to the HPPK family.

The enzyme catalyses 6-hydroxymethyl-7,8-dihydropterin + ATP = (7,8-dihydropterin-6-yl)methyl diphosphate + AMP + H(+). The protein operates within cofactor biosynthesis; tetrahydrofolate biosynthesis; 2-amino-4-hydroxy-6-hydroxymethyl-7,8-dihydropteridine diphosphate from 7,8-dihydroneopterin triphosphate: step 4/4. Its function is as follows. Catalyzes the transfer of pyrophosphate from adenosine triphosphate (ATP) to 6-hydroxymethyl-7,8-dihydropterin, an enzymatic step in folate biosynthesis pathway. In Pseudomonas putida (Arthrobacter siderocapsulatus), this protein is 2-amino-4-hydroxy-6-hydroxymethyldihydropteridine pyrophosphokinase (folK).